A 523-amino-acid polypeptide reads, in one-letter code: Sodium-dependent lysophosphatidylcholine symporter 1-B (523 aa).

The Cytoplasmic segment spans residues 1–34 (MAKGEGAEQYTNTSLLQKPSPDEVKLAKHETKSR). The chain crosses the membrane as a helical span at residues 35-64 (LSVCSKLCYAIGGAPYQITGCAIGFFLQIY). The Extracellular segment spans residues 65-75 (LLDVALLDPFY). Residues 76 to 96 (ASIILFVGRAWDAVTDPTVGF) traverse the membrane as a helical segment. Residues 97–108 (LVSRTPWTRFGR) lie on the Cytoplasmic side of the membrane. The chain crosses the membrane as a helical span at residues 109–128 (MMPWIVLSTPFAVLCYFLIW). At 129 to 138 (YVPSVDQGKV) the chain is on the extracellular side. A helical transmembrane segment spans residues 139–163 (VWYLIFYCCFQTLQTCFHVPYSALT). Over 164 to 170 (MFISTEQ) the chain is Cytoplasmic. A helical transmembrane segment spans residues 171–202 (KERDSATAYRMTVEVLGTLIGTAIQGQIVGMA). The Extracellular segment spans residues 203-226 (NAPCISTEIDLNSTGLEVAPDVNI). Residues Cys206 and Cys457 are joined by a disulfide bond. Residues Asn214 and Asn225 are each glycosylated (N-linked (GlcNAc...) asparagine). Residues 227–260 (TDPHVSLQDLRNAYMIASGVICAIYVVCAVVLFL) traverse the membrane as a helical segment. At 261 to 290 (GVKEQKDTCRVRTEPMSFFQGICMVMGHGP) the chain is on the cytoplasmic side. Residues 291-317 (YAKLVMGFLFTSLAFMLLEGNFALFCI) form a helical membrane-spanning segment. The Extracellular portion of the chain corresponds to 318 to 328 (YNLGFRNDFQN). Residues 329-347 (VLLVIMLSATLAIPFWQWF) traverse the membrane as a helical segment. Residues 348–351 (LTKF) are Cytoplasmic-facing. The chain crosses the membrane as a helical span at residues 352–373 (GKKTAVYIGTTSVVPFLISVVL). Over 374-376 (VPS) the chain is Extracellular. The helical transmembrane segment at 377 to 413 (SLAVTYIASFAAGVSVAAAFLLPWSMLPDVVDDFKVQ) threads the bilayer. The Cytoplasmic segment spans residues 414–423 (NPESQGHEAI). The helical transmembrane segment at 424–450 (FYSFYVFFTKFASGVSLGVSTLSLDFA) threads the bilayer. The Extracellular segment spans residues 451 to 462 (GYVTRGCTQPGE). A helical transmembrane segment spans residues 463–486 (VKLTLKILVSAAPIVLIIIGLLIF). At 487-523 (ISYPINEEKRQGNRKLLNEQRENEMDSETDSTELNVV) the chain is on the cytoplasmic side. The interval 504 to 523 (NEQRENEMDSETDSTELNVV) is disordered.

Belongs to the major facilitator superfamily. Expressed in the developing nervous system.

Its subcellular location is the cell membrane. It is found in the endoplasmic reticulum membrane. The enzyme catalyses a 1-acyl-sn-glycero-3-phosphocholine(in) + Na(+)(in) = a 1-acyl-sn-glycero-3-phosphocholine(out) + Na(+)(out). The catalysed reaction is 1-(4Z,7Z,10Z,13Z,16Z,19Z-docosahexaenoyl)-sn-glycero-3-phosphocholine(in) + Na(+)(in) = 1-(4Z,7Z,10Z,13Z,16Z,19Z-docosahexaenoyl)-sn-glycero-3-phosphocholine(out) + Na(+)(out). It catalyses the reaction 1-(9Z-octadecenoyl)-sn-glycero-3-phosphocholine(in) + Na(+)(in) = 1-(9Z-octadecenoyl)-sn-glycero-3-phosphocholine(out) + Na(+)(out). It carries out the reaction 1-hexadecanoyl-sn-glycero-3-phosphocholine(in) + Na(+)(in) = 1-hexadecanoyl-sn-glycero-3-phosphocholine(out) + Na(+)(out). The enzyme catalyses a 1-acyl-sn-glycero-3-phosphoethanolamine(in) + Na(+)(in) = a 1-acyl-sn-glycero-3-phosphoethanolamine(out) + Na(+)(out). Sodium-dependent lysophosphatidylcholine (LPC) symporter, which plays an essential role for blood-brain barrier formation and function. Specifically expressed in endothelium of the blood-brain barrier of micro-vessels and transports LPC into the brain. Transport of LPC is essential because it constitutes the major mechanism by which docosahexaenoic acid (DHA), an omega-3 fatty acid that is essential for normal brain growth and cognitive function, enters the brain. Transports LPC carrying long-chain fatty acids such LPC oleate and LPC palmitate with a minimum acyl chain length of 14 carbons. Does not transport docosahexaenoic acid in unesterified fatty acid. The polypeptide is Sodium-dependent lysophosphatidylcholine symporter 1-B (mfsd2ab) (Danio rerio (Zebrafish)).